Reading from the N-terminus, the 92-residue chain is Small ribosomal subunit protein uS19 (92 aa).

The protein belongs to the universal ribosomal protein uS19 family.

Protein S19 forms a complex with S13 that binds strongly to the 16S ribosomal RNA. In Staphylococcus epidermidis (strain ATCC 35984 / DSM 28319 / BCRC 17069 / CCUG 31568 / BM 3577 / RP62A), this protein is Small ribosomal subunit protein uS19.